Here is a 359-residue protein sequence, read N- to C-terminus: Probable dual-specificity RNA methyltransferase RlmN (359 aa).

Glu91 serves as the catalytic Proton acceptor. The Radical SAM core domain occupies 97–335 (QHYGHSVCVT…CVVRQEHGTD (239 aa)). Cysteines 104 and 340 form a disulfide. The [4Fe-4S] cluster site is built by Cys111, Cys115, and Cys118. Residues 163-164 (GE), Ser195, 218-220 (SLH), and Asn296 each bind S-adenosyl-L-methionine. Cys340 acts as the S-methylcysteine intermediate in catalysis.

This sequence belongs to the radical SAM superfamily. RlmN family. The cofactor is [4Fe-4S] cluster.

The protein resides in the cytoplasm. The catalysed reaction is adenosine(2503) in 23S rRNA + 2 reduced [2Fe-2S]-[ferredoxin] + 2 S-adenosyl-L-methionine = 2-methyladenosine(2503) in 23S rRNA + 5'-deoxyadenosine + L-methionine + 2 oxidized [2Fe-2S]-[ferredoxin] + S-adenosyl-L-homocysteine. The enzyme catalyses adenosine(37) in tRNA + 2 reduced [2Fe-2S]-[ferredoxin] + 2 S-adenosyl-L-methionine = 2-methyladenosine(37) in tRNA + 5'-deoxyadenosine + L-methionine + 2 oxidized [2Fe-2S]-[ferredoxin] + S-adenosyl-L-homocysteine. Functionally, specifically methylates position 2 of adenine 2503 in 23S rRNA and position 2 of adenine 37 in tRNAs. This Streptococcus pyogenes serotype M12 (strain MGAS2096) protein is Probable dual-specificity RNA methyltransferase RlmN.